The following is a 397-amino-acid chain: Ribosomal RNA large subunit methyltransferase I (397 aa).

In terms of domain architecture, PUA spans 2-79 (SASIYLVKGR…KEETVDLDFF (78 aa)).

This sequence belongs to the methyltransferase superfamily. RlmI family.

The protein resides in the cytoplasm. It carries out the reaction cytidine(1962) in 23S rRNA + S-adenosyl-L-methionine = 5-methylcytidine(1962) in 23S rRNA + S-adenosyl-L-homocysteine + H(+). In terms of biological role, specifically methylates the cytosine at position 1962 (m5C1962) of 23S rRNA. This is Ribosomal RNA large subunit methyltransferase I from Aeromonas hydrophila subsp. hydrophila (strain ATCC 7966 / DSM 30187 / BCRC 13018 / CCUG 14551 / JCM 1027 / KCTC 2358 / NCIMB 9240 / NCTC 8049).